A 205-amino-acid polypeptide reads, in one-letter code: Inactive ribonuclease-like protein 9 (205 aa).

An N-terminal signal peptide occupies residues 1 to 26; the sequence is MMRTLITIHPLPLLLLLQQLLQPVQF. Intrachain disulfides connect C98–C153, C116–C168, and C123–C130. 2 N-linked (GlcNAc...) asparagine glycosylation sites follow: N131 and N143.

Belongs to the pancreatic ribonuclease family.

The protein localises to the secreted. Functionally, does not exhibit any ribonuclease activity. This is Inactive ribonuclease-like protein 9 (RNASE9) from Gorilla gorilla gorilla (Western lowland gorilla).